Here is a 259-residue protein sequence, read N- to C-terminus: MIQIHALPAFNDNYIWLLQDLSSQQCAVVDPGDAKPVLGWLAQNPDYRLTDILITHHHNDHVGGVAELKQSTAARVLGPAAETIPARDIALVDNDRMTVLGLEFVVHAVPGHTLGHIAFYHEDATTPLLFSGDTLFAAGCGRLFEGTPQQMHDSLGRLAKLPDSTLIYCAHEYTLSNLRFAQAVEPANVDIAERLAEVTRWRSENRISLPSNMALEKRTNPFLRTGETSVKEKADERSDAQNTSQSAVFASLRAWKDKF.

Zn(2+)-binding residues include His-56, His-58, Asp-60, His-61, His-112, Asp-133, and His-171. The tract at residues 220–243 (NPFLRTGETSVKEKADERSDAQNT) is disordered. Positions 229–239 (SVKEKADERSD) are enriched in basic and acidic residues.

Belongs to the metallo-beta-lactamase superfamily. Glyoxalase II family. In terms of assembly, monomer. It depends on Zn(2+) as a cofactor.

It carries out the reaction an S-(2-hydroxyacyl)glutathione + H2O = a 2-hydroxy carboxylate + glutathione + H(+). The protein operates within secondary metabolite metabolism; methylglyoxal degradation; (R)-lactate from methylglyoxal: step 2/2. Its function is as follows. Thiolesterase that catalyzes the hydrolysis of S-D-lactoyl-glutathione to form glutathione and D-lactic acid. The sequence is that of Hydroxyacylglutathione hydrolase from Pseudomonas syringae pv. syringae (strain B728a).